A 365-amino-acid polypeptide reads, in one-letter code: Eukaryotic translation initiation factor 3 subunit H (365 aa).

The MPN domain occupies 15-166 (ILLDSLVVMK…IRAWRLSTAA (152 aa)). Positions 276–295 (KRQQENESRLARGDPPLPMD) are disordered. A compositionally biased stretch (basic and acidic residues) spans 277 to 287 (RQQENESRLAR).

It belongs to the eIF-3 subunit H family. In terms of assembly, component of the eukaryotic translation initiation factor 3 (eIF-3) complex.

Its subcellular location is the cytoplasm. In terms of biological role, component of the eukaryotic translation initiation factor 3 (eIF-3) complex, which is involved in protein synthesis of a specialized repertoire of mRNAs and, together with other initiation factors, stimulates binding of mRNA and methionyl-tRNAi to the 40S ribosome. The eIF-3 complex specifically targets and initiates translation of a subset of mRNAs involved in cell proliferation. This is Eukaryotic translation initiation factor 3 subunit H from Caenorhabditis briggsae.